A 353-amino-acid chain; its full sequence is Polycomb group RING finger protein 6 (353 aa).

A disordered region spans residues 1–116 (MDEAETDATE…FSLRLESGRA (116 aa)). A compositionally biased stretch (basic and acidic residues) spans 9-19 (TENKRASEAKR). Residues 23–39 (MPPPPPPPPPISPPALI) show a composition bias toward pro residues. Ser34 is subject to Phosphoserine. Positions 40–52 (PAPAAGEEGPASL) are enriched in low complexity. A compositionally biased stretch (basic and acidic residues) spans 69 to 82 (EPERSLGRLRGRFE). Positions 71-112 (ERSLGRLRGRFEDYDEELEEEEEMEEEEEEEEEMSHFSLRLE) form a coiled coil. Over residues 83 to 103 (DYDEELEEEEEMEEEEEEEEE) the composition is skewed to acidic residues. Ser118 is subject to Phosphoserine. Residues 137–176 (CSICKGYLIDATTITECLHTFCKSCIVRHFYYSNRCPKCN) form an RING-type zinc finger. Residues Lys226 and Lys237 each participate in a glycyl lysine isopeptide (Lys-Gly) (interchain with G-Cter in SUMO2) cross-link.

Component of a PRC1-like complex. Interacts with BMI1/PCGF4, RING1 and RNF2. Interacts with KDM5D. Interacts with CBX4, CBX6, CBX7 and CBX8. Phosphorylated during mitosis. Expressed in ovary, testis, stomach, liver, thymus and kidney (at protein level).

It is found in the nucleus. Functionally, transcriptional repressor. May modulate the levels of histone H3K4Me3 by activating KDM5D histone demethylase. Component of a Polycomb group (PcG) multiprotein PRC1-like complex, a complex class required to maintain the transcriptionally repressive state of many genes, including Hox genes, throughout development. PcG PRC1 complex acts via chromatin remodeling and modification of histones; it mediates monoubiquitination of histone H2A 'Lys-119', rendering chromatin heritably changed in its expressibility. Within the PRC1-like complex, regulates RNF2 ubiquitin ligase activity. The polypeptide is Polycomb group RING finger protein 6 (Pcgf6) (Mus musculus (Mouse)).